We begin with the raw amino-acid sequence, 330 residues long: MKIAIDAMGGDHAPKAVVLGAMKAIKEYSDLHITLVGKEEEIRQYLTSDERITILHTDEKIESTEEPVRAVRRKKQASMVLAAQQVKDGEADACISAGSTGALMAAGLFVVGRMEGIERPALSPTMPTVDGKGFVMLDVGANVDAKPIHLYQYAVMGSVYAEKVRGIENPRVGLLNVGTEDGKGNELSKQVFAMLKDAPINFVGNVESRDLLQGVADVVVCDGFTGNVALKSLEGTALALFSMLKEQLMSSFTSKLAAAVLKPKLMVLKDKMDYSEYGGAALFGLKAPVIKAHGSSNDQSIFSAIRQTREMVAKEVIPTISSVMEKESLQ.

The protein belongs to the PlsX family. As to quaternary structure, homodimer. Probably interacts with PlsY.

The protein resides in the cytoplasm. It carries out the reaction a fatty acyl-[ACP] + phosphate = an acyl phosphate + holo-[ACP]. It functions in the pathway lipid metabolism; phospholipid metabolism. Its function is as follows. Catalyzes the reversible formation of acyl-phosphate (acyl-PO(4)) from acyl-[acyl-carrier-protein] (acyl-ACP). This enzyme utilizes acyl-ACP as fatty acyl donor, but not acyl-CoA. This chain is Phosphate acyltransferase, found in Bacillus cereus (strain G9842).